A 100-amino-acid polypeptide reads, in one-letter code: NADH-quinone oxidoreductase subunit K 2 (100 aa).

3 helical membrane passes run 4 to 24 (LWWYIVLGVVLFVIGAAGVLI), 28 to 48 (ILVVLMSLELLLNSVNINFIA), and 60 to 80 (IFAIFVIAITAAEVAVALGIL).

It belongs to the complex I subunit 4L family. In terms of assembly, NDH-1 is composed of 14 different subunits. Subunits NuoA, H, J, K, L, M, N constitute the membrane sector of the complex.

Its subcellular location is the cell inner membrane. The catalysed reaction is a quinone + NADH + 5 H(+)(in) = a quinol + NAD(+) + 4 H(+)(out). Functionally, NDH-1 shuttles electrons from NADH, via FMN and iron-sulfur (Fe-S) centers, to quinones in the respiratory chain. The immediate electron acceptor for the enzyme in this species is believed to be ubiquinone. Couples the redox reaction to proton translocation (for every two electrons transferred, four hydrogen ions are translocated across the cytoplasmic membrane), and thus conserves the redox energy in a proton gradient. The protein is NADH-quinone oxidoreductase subunit K 2 of Rhizobium etli (strain ATCC 51251 / DSM 11541 / JCM 21823 / NBRC 15573 / CFN 42).